Consider the following 723-residue polypeptide: Transmembrane channel-like protein 7 (723 aa).

The disordered stretch occupies residues 1–21 (MSESSASALQLGRPSRQPAVH). Topologically, residues 1-168 (MSESSASALQ…GIQSYFSFLR (168 aa)) are extracellular. N-linked (GlcNAc...) asparagine glycosylation is present at asparagine 24. Residues 51–70 (RRRTTVHSRDKQSGTLLKST) are disordered. N-linked (GlcNAc...) asparagine glycosylation occurs at asparagine 84. Serine 89 bears the Phosphoserine mark. A glycan (N-linked (GlcNAc...) asparagine) is linked at asparagine 96. A helical transmembrane segment spans residues 169–189 (FLVLLNLVIFLIIFMLVLLPI). Residues 190–219 (LLTKYKITNSSFVLIPFKDTDIQCTVYPVS) lie on the Cytoplasmic side of the membrane. A helical transmembrane segment spans residues 220–240 (SSGLIYFYSYIIDLLSGTGFL). Residues 241-263 (EETSLFYGHYTIDGVKFQNFTYD) are Extracellular-facing. The N-linked (GlcNAc...) asparagine glycan is linked to asparagine 259. The chain crosses the membrane as a helical span at residues 264-284 (LPLAYLISTIAYLALSLLWIV). The Cytoplasmic portion of the chain corresponds to 285–362 (KRSVEGFKIN…EETIRIYSLR (78 aa)). A helical membrane pass occupies residues 363-383 (LFLNCIVLAVLGACFYAIYVA). The Extracellular segment spans residues 384–404 (TVFSQEHMKKEIDKMVFGENL). Residues 405–425 (LILYLPSIVITLANFITPMIF) traverse the membrane as a helical segment. Over 426–494 (AKIIRYEDYS…PCWETQVGQE (69 aa)) the chain is Cytoplasmic. Residues 495 to 515 (MYKLMIFDFIIILAVTLFVDF) form a helical membrane-spanning segment. The Extracellular portion of the chain corresponds to 516–555 (PRKLLVTYCSSWKLIQCWGQQEFAIPDNVLGIVYGQTICW). A helical membrane pass occupies residues 556 to 576 (IGAFFSPLLPAIATLKFIIIF). Topologically, residues 577–601 (YVKEWSLLYTCRPSPRPFRASNSNF) are cytoplasmic. Residues 602 to 622 (FFLLVLLIGLCLAIIPLTISI) form a helical membrane-spanning segment. Topologically, residues 623–665 (SRIPSSKACGPFTNFNTTWEVIPKTVSTFPSSLQSFIHGVTSE) are extracellular. An N-linked (GlcNAc...) asparagine glycan is attached at asparagine 638. A helical membrane pass occupies residues 666–686 (AFAVPFFMIICLIMFYFIALA). Topologically, residues 687–723 (GAHKRVVIQLREQLSLESRDKRYLIQKLTEAQRDTRN) are cytoplasmic.

This sequence belongs to the TMC family. In terms of assembly, interacts with PIEZO2; the interaction inhibits PIEZO2-conducted mechanically activated currents.

Its subcellular location is the membrane. Its function is as follows. Acts as an inhibitory modulator of PIEZO2 mechanosensitive channel in dorsal root ganglion (DRG) neurons through physical interactions or interference with the interaction between Piezo2 and the cytoskeleton. The chain is Transmembrane channel-like protein 7 (TMC7) from Macaca fascicularis (Crab-eating macaque).